Here is a 351-residue protein sequence, read N- to C-terminus: Porphobilinogen deaminase (351 aa).

Cys242 carries the S-(dipyrrolylmethanemethyl)cysteine modification.

This sequence belongs to the HMBS family. Monomer. It depends on dipyrromethane as a cofactor.

The enzyme catalyses 4 porphobilinogen + H2O = hydroxymethylbilane + 4 NH4(+). It functions in the pathway porphyrin-containing compound metabolism; protoporphyrin-IX biosynthesis; coproporphyrinogen-III from 5-aminolevulinate: step 2/4. Functionally, tetrapolymerization of the monopyrrole PBG into the hydroxymethylbilane pre-uroporphyrinogen in several discrete steps. In Rickettsia africae (strain ESF-5), this protein is Porphobilinogen deaminase.